We begin with the raw amino-acid sequence, 713 residues long: Bifunctional protein gal10 (713 aa).

Residues 1-350 (MAVQDEYILV…TIENPFGFQI (350 aa)) are galactowaldenase. Position 7-38 (7-38 (YILVTGGAGYIGSHTVIELINHGYKVIIVDNL)) interacts with NAD(+). The segment at 351-713 (DNYKWKLFNT…SASYNSGEYY (363 aa)) is mutarotase. His532 functions as the For mutarotase activity in the catalytic mechanism.

This sequence in the N-terminal section; belongs to the NAD(P)-dependent epimerase/dehydratase family. In the C-terminal section; belongs to the aldose epimerase family. The cofactor is NAD(+).

The catalysed reaction is UDP-alpha-D-glucose = UDP-alpha-D-galactose. It catalyses the reaction alpha-D-glucose = beta-D-glucose. The protein operates within carbohydrate metabolism; galactose metabolism. It functions in the pathway carbohydrate metabolism; hexose metabolism. In terms of biological role, mutarotase converts alpha-aldose to the beta-anomer. It is active on D-glucose, L-arabinose, D-xylose, D-galactose, maltose and lactose. This Schizosaccharomyces pombe (strain 972 / ATCC 24843) (Fission yeast) protein is Bifunctional protein gal10 (gal10).